A 141-amino-acid chain; its full sequence is Large ribosomal subunit protein uL11 (141 aa).

The protein belongs to the universal ribosomal protein uL11 family. As to quaternary structure, part of the ribosomal stalk of the 50S ribosomal subunit. Interacts with L10 and the large rRNA to form the base of the stalk. L10 forms an elongated spine to which L12 dimers bind in a sequential fashion forming a multimeric L10(L12)X complex. One or more lysine residues are methylated.

Forms part of the ribosomal stalk which helps the ribosome interact with GTP-bound translation factors. In Streptococcus agalactiae serotype III (strain NEM316), this protein is Large ribosomal subunit protein uL11.